Here is a 250-residue protein sequence, read N- to C-terminus: Probable transcriptional regulatory protein Cvib_1432 (250 aa).

Belongs to the TACO1 family.

The protein resides in the cytoplasm. The sequence is that of Probable transcriptional regulatory protein Cvib_1432 from Chlorobium phaeovibrioides (strain DSM 265 / 1930) (Prosthecochloris vibrioformis (strain DSM 265)).